Reading from the N-terminus, the 488-residue chain is Neisserial heparin binding antigen (488 aa).

An N-terminal signal peptide occupies residues 1–17 (MFKRSVIAMACIFALSA). Residue C18 is the site of N-palmitoyl cysteine attachment. A lipid anchor (S-diacylglycerol cysteine) is attached at C18. The tract at residues 21–201 (GGGGSPDVKS…NPAPANGGSN (181 aa)) is disordered. The segment covering 43 to 53 (SEKETEAKEDA) has biased composition (basic and acidic residues). Residues 54–70 (PQAGSQGQGAPSAQGSQ) show a composition bias toward low complexity. Composition is skewed to polar residues over residues 101–118 (DMPQ…NHTP) and 127–142 (MENQ…QPAN). The span at 160-183 (AGGQNAGNTAAQGANQAGNNQAAG) shows a compositional bias: low complexity. Positions 296 to 306 (RFRRSARSRRS) match the Arg-rich motif motif. Positions 306–488 (SLPAEMPLIP…GVFAGKKEQD (183 aa)) are C1 fragment.

This sequence belongs to the NHBA family. The C-terminal beta-barrel forms a monomer. Post-translationally, cleaved in vivo by the Neisserial phase-variable autotransporter/serine protease NalP to give 2 fragments. The N-terminus remains in the cell outer membrane while the 22 kDa C-terminus (beginning on Ser-293) is soluble; this soluble fragment is called C2. Cleaved in vitro by human lactoferrin (LTF, between Arg-305 and Ser-306), this fragment is called C1. Cleavage by NalP or lactoferrin does not alter killing of Neisseria by bactericidal antibodies in vitro. Recombinant and cell surface protein is cleaved by human saliva kallikrein (KLK1) between Ser-303 and Arg-304; in saliva kallikrein is more active on NHBA than lactoferrin. Human plasma kallikrein (KLKB1) cleaves in a similar manner to KLK1.

The protein resides in the cell outer membrane. It localises to the cell surface. The protein localises to the host mitochondrion. A major human immunogenic protein detected in patients recovering from meningitidis, where it induces bactericidal antibodies. Binds heparin and heparan sulfate proteoglycan in vitro via the Arg-rich motif. Heparin-binding to this protein protects bacteria against killing by bactericidal antibodies (serum killing). Binds to human cells via the Arg-rich region; binding may require the intact protein as protein fragments do not bind to human cells. Protein binding to human cells is abolished by treatment with heparinase III but not chondroitinase ABC. The bacteria binds a number of human extracellular sialyated and/or sulfated glycans via this protein, including chondroitin sulfate (KD=5.2 nM), heparin (KD=52 nM) and ganglioside GT3 (KD=210 nM). The recombinant protein binds DNA non-specifically. Its function is as follows. Plays a role in extracellular-DNA (eDNA) mediated biofilm formation. In strain MC58 eDNA stimulates biofilm formation. When NHBA is not processed by NalP there is an increase in positively charged, NHBA- and IgA-derived DNA-binding peptides on the cell surface, resulting in increased DNA-binding peptides and increased biofilm formation. Functionally, [C2 fragment] Localizes to host mitochondria when applied to the apical side of human endothelial cell layers, where it induces production of reactive oxygen species which lead to increased permeability of host endothelial cells. The C1 fragment (which lacks the first 14 residues of C2) does not have this effect. It is not known if this occurs during Neisseria infections. This Neisseria meningitidis serogroup B (strain ATCC BAA-335 / MC58) protein is Neisserial heparin binding antigen.